We begin with the raw amino-acid sequence, 59 residues long: Sec-independent protein translocase protein TatA (59 aa).

A helical transmembrane segment spans residues 1 to 21 (MGRLGLTEILVIVGIVILLFG).

It belongs to the TatA/E family. Forms a complex with TatC.

It is found in the cell inner membrane. Part of the twin-arginine translocation (Tat) system that transports large folded proteins containing a characteristic twin-arginine motif in their signal peptide across membranes. TatA could form the protein-conducting channel of the Tat system. The chain is Sec-independent protein translocase protein TatA from Flavobacterium johnsoniae (strain ATCC 17061 / DSM 2064 / JCM 8514 / BCRC 14874 / CCUG 350202 / NBRC 14942 / NCIMB 11054 / UW101) (Cytophaga johnsonae).